Consider the following 176-residue polypeptide: Ribosome maturation factor RimM (176 aa).

Residues 96 to 176 (PEDEFYWRDL…QILVDWDPDF (81 aa)) enclose the PRC barrel domain.

The protein belongs to the RimM family. As to quaternary structure, binds ribosomal protein uS19.

It is found in the cytoplasm. Functionally, an accessory protein needed during the final step in the assembly of 30S ribosomal subunit, possibly for assembly of the head region. Essential for efficient processing of 16S rRNA. May be needed both before and after RbfA during the maturation of 16S rRNA. It has affinity for free ribosomal 30S subunits but not for 70S ribosomes. This Shewanella piezotolerans (strain WP3 / JCM 13877) protein is Ribosome maturation factor RimM.